The sequence spans 567 residues: DNA-binding protein REPIN1 (567 aa).

The tract at residues 17-52 (PRLLSGPSQESPQTLGKESRGLRQQGTSVAQSGAQA) is disordered. Residues 22 to 50 (GPSQESPQTLGKESRGLRQQGTSVAQSGA) are compositionally biased toward polar residues. At serine 27 the chain carries Phosphoserine. Threonine 30 is modified (phosphothreonine). Lysine 33 bears the N6-acetyllysine mark. A C2H2-type 1; atypical zinc finger spans residues 57-79 (HRCAHCRRHFPGWVALWLHTRRC). 7 consecutive C2H2-type zinc fingers follow at residues 85 to 107 (LPCP…RQVH), 116 to 138 (FACH…LRAH), 145 to 168 (IACP…RRCH), 177 to 199 (FICG…KRVH), 236 to 258 (FQCA…RRVH), 264 to 286 (HQCP…RRIH), and 292 to 314 (YPCK…SKIH). Lysine 276 is modified (N6-acetyllysine). Over residues 305 to 315 (PNLLSHSKIHK) the composition is skewed to basic residues. A disordered region spans residues 305–372 (PNLLSHSKIH…HPQDPIEAPP (68 aa)). The segment covering 345-362 (PAVPLKPAQEPPPGAPPE) has biased composition (pro residues). C2H2-type zinc fingers lie at residues 375 to 397 (YSCD…QRQH), 403 to 425 (FTCA…SRVH), 431 to 453 (FACE…RRDH), 459 to 481 (FVCP…RRIH), 487 to 509 (YVCP…RRIH), 515 to 537 (YACP…RKSH), and 543 to 565 (FCCA…QKKH).

As to quaternary structure, homodimers and homomultimers. Found in a complex with RIP60 and RIP100. In terms of tissue distribution, expressed in adipose tissue and bone tissue.

It is found in the nucleus. The protein resides in the cytoplasm. The protein localises to the cytosol. Sequence-specific double-stranded DNA-binding protein. Binds ATT-rich and T-rich DNA sequences and facilitates DNA bending. May regulate the expression of genes involved in cellular fatty acid import, including SCARB1/CD36, and genes involved in lipid droplet formation. May regulate the expression of LCN2, and thereby influence iron metabolism and apoptosis-related pathways. May regulate the expression of genes involved in glucose transport. The chain is DNA-binding protein REPIN1 (REPIN1) from Homo sapiens (Human).